A 183-amino-acid chain; its full sequence is Early E3 20.2 kDa glycoprotein (183 aa).

Residues N30, N73, N117, N134, and N135 are each glycosylated (N-linked (GlcNAc...) asparagine; by host).

It belongs to the adenoviridae E3_20 family.

In Homo sapiens (Human), this protein is Early E3 20.2 kDa glycoprotein.